A 366-amino-acid chain; its full sequence is Carbamoyl phosphate synthase small chain (366 aa).

The segment at 1-168 (MYGILVLEDG…KETVVYSADD (168 aa)) is CPSase. L-glutamine contacts are provided by S45, G220, and G222. Residues 172–363 (KCVLIDCGVK…VELGIKFKAE (192 aa)) enclose the Glutamine amidotransferase type-1 domain. Residue C247 is the Nucleophile of the active site. 5 residues coordinate L-glutamine: L248, Q251, N289, G291, and F292. Active-site residues include H336 and E338.

Belongs to the CarA family. As to quaternary structure, composed of two chains; the small (or glutamine) chain promotes the hydrolysis of glutamine to ammonia, which is used by the large (or ammonia) chain to synthesize carbamoyl phosphate. Tetramer of heterodimers (alpha,beta)4.

The catalysed reaction is hydrogencarbonate + L-glutamine + 2 ATP + H2O = carbamoyl phosphate + L-glutamate + 2 ADP + phosphate + 2 H(+). It catalyses the reaction L-glutamine + H2O = L-glutamate + NH4(+). It functions in the pathway amino-acid biosynthesis; L-arginine biosynthesis; carbamoyl phosphate from bicarbonate: step 1/1. Its pathway is pyrimidine metabolism; UMP biosynthesis via de novo pathway; (S)-dihydroorotate from bicarbonate: step 1/3. In terms of biological role, small subunit of the glutamine-dependent carbamoyl phosphate synthetase (CPSase). CPSase catalyzes the formation of carbamoyl phosphate from the ammonia moiety of glutamine, carbonate, and phosphate donated by ATP, constituting the first step of 2 biosynthetic pathways, one leading to arginine and/or urea and the other to pyrimidine nucleotides. The small subunit (glutamine amidotransferase) binds and cleaves glutamine to supply the large subunit with the substrate ammonia. The protein is Carbamoyl phosphate synthase small chain of Methanococcus maripaludis (strain C6 / ATCC BAA-1332).